The sequence spans 227 residues: DNA repair protein RecO (227 aa).

It belongs to the RecO family.

In terms of biological role, involved in DNA repair and RecF pathway recombination. This chain is DNA repair protein RecO, found in Pseudomonas putida (strain ATCC 700007 / DSM 6899 / JCM 31910 / BCRC 17059 / LMG 24140 / F1).